We begin with the raw amino-acid sequence, 445 residues long: Probable glycine dehydrogenase (decarboxylating) subunit 1 (445 aa).

Belongs to the GcvP family. N-terminal subunit subfamily. As to quaternary structure, the glycine cleavage system is composed of four proteins: P, T, L and H. In this organism, the P 'protein' is a heterodimer of two subunits.

It catalyses the reaction N(6)-[(R)-lipoyl]-L-lysyl-[glycine-cleavage complex H protein] + glycine + H(+) = N(6)-[(R)-S(8)-aminomethyldihydrolipoyl]-L-lysyl-[glycine-cleavage complex H protein] + CO2. In terms of biological role, the glycine cleavage system catalyzes the degradation of glycine. The P protein binds the alpha-amino group of glycine through its pyridoxal phosphate cofactor; CO(2) is released and the remaining methylamine moiety is then transferred to the lipoamide cofactor of the H protein. This Chlorobium chlorochromatii (strain CaD3) protein is Probable glycine dehydrogenase (decarboxylating) subunit 1.